We begin with the raw amino-acid sequence, 94 residues long: Integration host factor subunit beta (94 aa).

The protein belongs to the bacterial histone-like protein family. As to quaternary structure, heterodimer of an alpha and a beta chain.

Functionally, this protein is one of the two subunits of integration host factor, a specific DNA-binding protein that functions in genetic recombination as well as in transcriptional and translational control. The polypeptide is Integration host factor subunit beta (Serratia proteamaculans (strain 568)).